The chain runs to 278 residues: Large ribosomal subunit protein uL2c (278 aa).

Disordered stretches follow at residues 32–56 and 203–256; these read SLTS…HRGG and QSIG…PTIG. Residues 209 to 220 show a composition bias toward basic residues; that stretch reads GSKRWQGKRPKV.

This sequence belongs to the universal ribosomal protein uL2 family. Part of the 50S ribosomal subunit.

Its subcellular location is the plastid. The protein resides in the chloroplast. This Chara vulgaris (Common stonewort) protein is Large ribosomal subunit protein uL2c (rpl2).